Here is a 279-residue protein sequence, read N- to C-terminus: Tryptophan 2,3-dioxygenase (279 aa).

Substrate-binding positions include F48–H52, Y110, and R114. A heme-binding site is contributed by H237. T251 serves as a coordination point for substrate.

Belongs to the tryptophan 2,3-dioxygenase family. As to quaternary structure, homotetramer. Requires heme as cofactor.

It catalyses the reaction L-tryptophan + O2 = N-formyl-L-kynurenine. Its pathway is amino-acid degradation; L-tryptophan degradation via kynurenine pathway; L-kynurenine from L-tryptophan: step 1/2. Its function is as follows. Heme-dependent dioxygenase that catalyzes the oxidative cleavage of the L-tryptophan (L-Trp) pyrrole ring and converts L-tryptophan to N-formyl-L-kynurenine. Catalyzes the oxidative cleavage of the indole moiety. This chain is Tryptophan 2,3-dioxygenase, found in Exiguobacterium sibiricum (strain DSM 17290 / CCUG 55495 / CIP 109462 / JCM 13490 / 255-15).